A 67-amino-acid chain; its full sequence is DNA-directed RNA polymerase subunit omega (67 aa).

The protein belongs to the RNA polymerase subunit omega family. The RNAP catalytic core consists of 2 alpha, 1 beta, 1 beta' and 1 omega subunit. When a sigma factor is associated with the core the holoenzyme is formed, which can initiate transcription.

The catalysed reaction is RNA(n) + a ribonucleoside 5'-triphosphate = RNA(n+1) + diphosphate. Functionally, promotes RNA polymerase assembly. Latches the N- and C-terminal regions of the beta' subunit thereby facilitating its interaction with the beta and alpha subunits. This Nitrosomonas eutropha (strain DSM 101675 / C91 / Nm57) protein is DNA-directed RNA polymerase subunit omega.